Reading from the N-terminus, the 211-residue chain is Large ribosomal subunit protein eL13 (211 aa).

An N6-acetyllysine modification is found at Lys16. A phosphoserine mark is found at Ser52 and Ser77. Glycyl lysine isopeptide (Lys-Gly) (interchain with G-Cter in SUMO2) cross-links involve residues Lys123 and Lys145. Lys174 participates in a covalent cross-link: Glycyl lysine isopeptide (Lys-Gly) (interchain with G-Cter in SUMO1); alternate. Residues Lys174 and Lys177 each participate in a glycyl lysine isopeptide (Lys-Gly) (interchain with G-Cter in SUMO2); alternate cross-link. Position 177 is an N6-acetyllysine; alternate (Lys177).

The protein belongs to the eukaryotic ribosomal protein eL13 family. In terms of assembly, component of the 60S large ribosomal subunit (LSU).

It is found in the cytoplasm. In terms of biological role, component of the ribosome, a large ribonucleoprotein complex responsible for the synthesis of proteins in the cell. The small ribosomal subunit (SSU) binds messenger RNAs (mRNAs) and translates the encoded message by selecting cognate aminoacyl-transfer RNA (tRNA) molecules. The large subunit (LSU) contains the ribosomal catalytic site termed the peptidyl transferase center (PTC), which catalyzes the formation of peptide bonds, thereby polymerizing the amino acids delivered by tRNAs into a polypeptide chain. The nascent polypeptides leave the ribosome through a tunnel in the LSU and interact with protein factors that function in enzymatic processing, targeting, and the membrane insertion of nascent chains at the exit of the ribosomal tunnel. As part of the LSU, it is probably required for its formation and the maturation of rRNAs. Plays a role in bone development. The protein is Large ribosomal subunit protein eL13 (RPL13) of Bos taurus (Bovine).